The sequence spans 498 residues: Probable global transactivator (498 aa).

In terms of domain architecture, Helicase ATP-binding spans 43–206 (RERRGRPHGG…YAIIHFLRCR (164 aa)). ATP is bound at residue 55 to 63 (ADDMGLGKT). Positions 157 to 160 (DEAH) match the DEAH box motif. One can recognise a Helicase C-terminal domain in the interval 337 to 493 (ELVQRVLDTP…RTALNYEDIK (157 aa)).

It belongs to the SNF2/RAD54 helicase family.

This is Probable global transactivator (GTA) from Orgyia pseudotsugata (Douglas-fir tussock moth).